Reading from the N-terminus, the 298-residue chain is tRNA dimethylallyltransferase (298 aa).

12–19 contributes to the ATP binding site; the sequence is GPTASGKT. Residue 14–19 coordinates substrate; sequence TASGKT. The interval 37–40 is interaction with substrate tRNA; the sequence is DSRQ.

It belongs to the IPP transferase family. Monomer. The cofactor is Mg(2+).

The catalysed reaction is adenosine(37) in tRNA + dimethylallyl diphosphate = N(6)-dimethylallyladenosine(37) in tRNA + diphosphate. Its function is as follows. Catalyzes the transfer of a dimethylallyl group onto the adenine at position 37 in tRNAs that read codons beginning with uridine, leading to the formation of N6-(dimethylallyl)adenosine (i(6)A). This chain is tRNA dimethylallyltransferase, found in Synechococcus sp. (strain CC9902).